Reading from the N-terminus, the 339-residue chain is Biotin synthase (339 aa).

Residues 55–282 (NAVQLSTLLS…KAVVRLSAGR (228 aa)) form the Radical SAM core domain. Positions 70, 74, and 77 each coordinate [4Fe-4S] cluster. Residues cysteine 114, cysteine 145, cysteine 205, and arginine 277 each coordinate [2Fe-2S] cluster.

The protein belongs to the radical SAM superfamily. Biotin synthase family. Homodimer. [4Fe-4S] cluster serves as cofactor. [2Fe-2S] cluster is required as a cofactor.

The enzyme catalyses (4R,5S)-dethiobiotin + (sulfur carrier)-SH + 2 reduced [2Fe-2S]-[ferredoxin] + 2 S-adenosyl-L-methionine = (sulfur carrier)-H + biotin + 2 5'-deoxyadenosine + 2 L-methionine + 2 oxidized [2Fe-2S]-[ferredoxin]. It participates in cofactor biosynthesis; biotin biosynthesis; biotin from 7,8-diaminononanoate: step 2/2. Functionally, catalyzes the conversion of dethiobiotin (DTB) to biotin by the insertion of a sulfur atom into dethiobiotin via a radical-based mechanism. The polypeptide is Biotin synthase (Burkholderia ambifaria (strain MC40-6)).